Reading from the N-terminus, the 389-residue chain is Homoserine O-acetyltransferase (389 aa).

One can recognise an AB hydrolase-1 domain in the interval 63–371 (NAVLVLHALT…SSDYGHDGFL (309 aa)). The Nucleophile role is filled by Ser168. Arg240 serves as a coordination point for substrate. Catalysis depends on residues Asp334 and His367. Position 368 (Asp368) interacts with substrate.

This sequence belongs to the AB hydrolase superfamily. MetX family. As to quaternary structure, homodimer.

Its subcellular location is the cytoplasm. It catalyses the reaction L-homoserine + acetyl-CoA = O-acetyl-L-homoserine + CoA. The protein operates within amino-acid biosynthesis; L-methionine biosynthesis via de novo pathway; O-acetyl-L-homoserine from L-homoserine: step 1/1. Functionally, transfers an acetyl group from acetyl-CoA to L-homoserine, forming acetyl-L-homoserine. The protein is Homoserine O-acetyltransferase of Clavibacter michiganensis subsp. michiganensis (strain NCPPB 382).